A 435-amino-acid polypeptide reads, in one-letter code: Serine--tRNA ligase (435 aa).

238 to 240 is an L-serine binding site; the sequence is TAE. 269–271 provides a ligand contact to ATP; sequence RAE. L-serine is bound at residue E292. 356–359 contributes to the ATP binding site; sequence EISS. S392 contacts L-serine.

This sequence belongs to the class-II aminoacyl-tRNA synthetase family. Type-1 seryl-tRNA synthetase subfamily. In terms of assembly, homodimer. The tRNA molecule binds across the dimer.

It localises to the cytoplasm. The enzyme catalyses tRNA(Ser) + L-serine + ATP = L-seryl-tRNA(Ser) + AMP + diphosphate + H(+). It carries out the reaction tRNA(Sec) + L-serine + ATP = L-seryl-tRNA(Sec) + AMP + diphosphate + H(+). It functions in the pathway aminoacyl-tRNA biosynthesis; selenocysteinyl-tRNA(Sec) biosynthesis; L-seryl-tRNA(Sec) from L-serine and tRNA(Sec): step 1/1. Catalyzes the attachment of serine to tRNA(Ser). Is also able to aminoacylate tRNA(Sec) with serine, to form the misacylated tRNA L-seryl-tRNA(Sec), which will be further converted into selenocysteinyl-tRNA(Sec). This chain is Serine--tRNA ligase, found in Methylobacterium sp. (strain 4-46).